A 329-amino-acid polypeptide reads, in one-letter code: MNITVLGAGAWGTALAIYLSARHHVTLWTRNTGHLAELAALRVNQRYLPGQHLPDSIHLASALSDALEQAELVLVVVPVAGLRVTLQRIAALNQSLPLVLGCKGFEAGTAKLPCQVVEDVYSAEITCGVLSGPSFAQEVAMGLPAALTLASDDDAFARRIASEIHTSILRVYSSSDVVGVEVGGALKNVIAIAAGISDGLAFGNNARAALITRGLAEITRLGVALGGHRKTFTGLSGIGDLILTCTGDLSRNRQVGMMLAAGCQLPEILLEIGHVTEGVYTVREAHEMGRQLQIDMPVTQAVYSILYEQIPVESAIRNMLDREPGAETD.

The NADPH site is built by tryptophan 11, arginine 30, and lysine 103. Sn-glycerol 3-phosphate is bound by residues lysine 103, glycine 132, and serine 134. Alanine 136 contributes to the NADPH binding site. 5 residues coordinate sn-glycerol 3-phosphate: lysine 187, aspartate 240, serine 250, arginine 251, and asparagine 252. The Proton acceptor role is filled by lysine 187. Arginine 251 lines the NADPH pocket. The NADPH site is built by valine 275 and glutamate 277.

It belongs to the NAD-dependent glycerol-3-phosphate dehydrogenase family.

The protein resides in the cytoplasm. It catalyses the reaction sn-glycerol 3-phosphate + NAD(+) = dihydroxyacetone phosphate + NADH + H(+). It carries out the reaction sn-glycerol 3-phosphate + NADP(+) = dihydroxyacetone phosphate + NADPH + H(+). Its pathway is membrane lipid metabolism; glycerophospholipid metabolism. In terms of biological role, catalyzes the reduction of the glycolytic intermediate dihydroxyacetone phosphate (DHAP) to sn-glycerol 3-phosphate (G3P), the key precursor for phospholipid synthesis. The chain is Glycerol-3-phosphate dehydrogenase [NAD(P)+] from Nitrosomonas eutropha (strain DSM 101675 / C91 / Nm57).